An 85-amino-acid chain; its full sequence is Putative membrane protein insertion efficiency factor (85 aa).

It belongs to the UPF0161 family.

The protein resides in the cell inner membrane. Could be involved in insertion of integral membrane proteins into the membrane. The polypeptide is Putative membrane protein insertion efficiency factor (Escherichia coli O157:H7).